Consider the following 187-residue polypeptide: GTP cyclohydrolase 1 (187 aa).

Positions 76, 79, and 148 each coordinate Zn(2+).

This sequence belongs to the GTP cyclohydrolase I family. In terms of assembly, toroid-shaped homodecamer, composed of two pentamers of five dimers.

The catalysed reaction is GTP + H2O = 7,8-dihydroneopterin 3'-triphosphate + formate + H(+). It functions in the pathway cofactor biosynthesis; 7,8-dihydroneopterin triphosphate biosynthesis; 7,8-dihydroneopterin triphosphate from GTP: step 1/1. In Acetivibrio thermocellus (strain ATCC 27405 / DSM 1237 / JCM 9322 / NBRC 103400 / NCIMB 10682 / NRRL B-4536 / VPI 7372) (Clostridium thermocellum), this protein is GTP cyclohydrolase 1.